A 461-amino-acid chain; its full sequence is E3 ubiquitin-protein ligase parkin (461 aa).

A Ubiquitin-like domain is found at 30-90 (VNIYVKSNVG…DSTVIEVLDF (61 aa)). Residue Ser-92 is modified to Phosphoserine. The RING-type 0; atypical zinc finger occupies 145–227 (AHFFIYCANP…SQGENDTAVP (83 aa)). Residues Cys-151, Cys-155, Cys-167, and Cys-170 each contribute to the Zn(2+) site. Thr-176 carries the post-translational modification Phosphothreonine. Residues Cys-197, Cys-202, Cys-213, His-216, Cys-240, Cys-243, Cys-255, His-259, Cys-262, Cys-265, Cys-291, Cys-295, Cys-334, Cys-339, Cys-354, Cys-356, Cys-361, Cys-364, His-369, Cys-373, Cys-415, and Cys-418 each coordinate Zn(2+). The interval 236–461 (KKIPCLACTD…RDCMASHWFG (226 aa)) is TRIAD supradomain. Residues 240 to 295 (CLACTDICDPVLVFSCDNRHVTCLECFKNYCGSRLKDRQFLSHPDFGYTLPCPAGC) form an RING-type 1 zinc finger. 2 consecutive IBR-type zinc fingers follow at residues 315–373 (EQYH…LGEC) and 411–452 (LTKP…PWER). An RING-type 2; atypical zinc finger spans residues 415–446 (CPKCRTSTERAGGCMHMICTRANCGFHWCWVC). Cys-428 is an active-site residue. Cys-433, Cys-438, Cys-443, Cys-446, Cys-454, and His-458 together coordinate Zn(2+).

The protein belongs to the RBR family. Parkin subfamily. In terms of assembly, forms an E3 ubiquitin ligase complex with E2 ubiquitin-conjugating enzymes. Auto-ubiquitinates in an E2-dependent manner leading to its own degradation. Post-translationally, phosphorylated. Activation requires phosphorylation at Ser-92 by Pink1 and binding to Pink1-phosphorylated polyubiquitin chains. Phosphorylation at Thr-176 by Pink1 is also important for mitochondrial localization.

It localises to the mitochondrion. It is found in the cytoplasm. The protein localises to the cytosol. The catalysed reaction is [E2 ubiquitin-conjugating enzyme]-S-ubiquitinyl-L-cysteine + [acceptor protein]-L-lysine = [E2 ubiquitin-conjugating enzyme]-L-cysteine + [acceptor protein]-N(6)-ubiquitinyl-L-lysine.. It functions in the pathway protein modification; protein ubiquitination. With respect to regulation, in the autoinhibited state the side chain of Phe-460 inserts into a hydrophobic groove in RING-0, occluding the ubiquitin acceptor site Cys-428, whereas the REP repressor element binds RING-1 and blocks its E2-binding site. Activation of park requires 2 steps: (1) phosphorylation at Ser-92 by Pink1 and (2) binding to phosphorylated ubiquitin, leading to unlock repression of the catalytic Cys-428 by the RING-0 region via an allosteric mechanism and converting park to its fully-active form. According to another report, phosphorylation at Ser-92 by Pink1 is not essential for activation and only binding to phosphorylated ubiquitin is essential to unlock repression. Its function is as follows. E3 ubiquitin-protein ligase which accepts ubiquitin from E2 ubiquitin-conjugating enzymes in the form of a thioester and then directly transfers the ubiquitin to targeted substrates, such as Marf, Opa1, Sep1, Tom20 and porin. Mediates monoubiquitination as well as 'Lys-6', 'Lys-11', 'Lys-48'-linked and 'Lys-63'-linked polyubiquitination of substrates, depending on the context. Protects against mitochondrial dysfunction during cellular stress, by acting downstream of Pink1, to coordinate mitochondrial quality control mechanisms that remove and replace dysfunctional mitochondrial components. Depending on the severity of mitochondrial damage and/or dysfunction, activity ranges from preventing apoptosis and stimulating mitochondrial biogenesis to regulating mitochondrial dynamics and eliminating severely damaged mitochondria via mitophagy. Appears to be particularly important in maintaining the physiology and function of cells with high energy demands that are undergoing stress or altered metabolic environment, including spermatids, muscle cells and neurons such as the dopaminergic (DA) neurons. Activation and recruitment onto the outer membrane of damaged/dysfunctional mitochondria (OMM) requires Pink1-mediated phosphorylation of both park and ubiquitin. In depolarized mitochondria, mediates the decision between mitophagy or preventing apoptosis by inducing either the poly- or monoubiquitination of porin/VDAC; polyubiquitination of porin promotes mitophagy, while monoubiquitination of porin decreases mitochondrial calcium influx which ultimately inhibits apoptosis. When cellular stress results in irreversible mitochondrial damage, promotes the autophagic degradation of dysfunctional depolarized mitochondria (mitophagy) by promoting the ubiquitination of mitochondrial proteins. Preferentially assembles 'Lys-6'-, 'Lys-11'- and 'Lys-63'-linked polyubiquitin chains following mitochondrial damage, leading to mitophagy. In developing tissues, inhibits JNK-mediated apoptosis by negatively regulating bsk transcription. The Pink1-park pathway also promotes fission and/or inhibits fusion of damaged mitochondria by mediating the ubiquitination and subsequent degradation of proteins involved in mitochondrial fusion/fission such as Marf and Opa1. This prevents the refusion of unhealthy mitochondria with the healthy mitochondrial network and/or initiates mitochondrial fragmentation facilitating their later engulfment by autophagosomes. Regulates motility of damaged mitochondria by phosphorylating Miro which likely promotes its park-dependent degradation by the proteasome; in motor neurons, this inhibits mitochondrial intracellular anterograde transport along the axons which probably increases the chance of the mitochondria being eliminated in the soma. The Pink1-park pathway is also involved in mitochondrial regeneration processes such as promoting mitochondrial biogenesis, activating localized mitochondrial repair, promoting selective turnover of mitochondrial proteins and initiating the mitochondrial import of endogenous proteins. Involved in mitochondrial biogenesis via the ubiquitination of transcriptional repressor Paris which leads to its subsequent proteasomal degradation and allows activation of the transcription factor srl. Promotes localized mitochondrial repair by activating the translation of specific nuclear-encoded mitochondrial RNAs (nc-mtRNAs) on the mitochondrial surface, including several key electron transport chain component nc-mtRNAs. This Pediculus humanus subsp. corporis (Body louse) protein is E3 ubiquitin-protein ligase parkin.